We begin with the raw amino-acid sequence, 198 residues long: MMYYCGIDEAGFGAGAAQVYVSACVLDPQKPINESLTDSKQLTPKKRELLAEEIKQDALTWCIATASVEEIEKLNIRKATILAMKRSLEGLTVKPDMVYIDGINSPEVPFPVETVVKGDSKIPAISAASILAKVARDNRMLEYDEQYPEYGFKDHKGYLTKNHIKAIQKYGPSPIHRKTYKPIKKIIDNQKNQQLELF.

In terms of domain architecture, RNase H type-2 spans 2–192; sequence MYYCGIDEAG…IKKIIDNQKN (191 aa). Positions 8, 9, and 101 each coordinate a divalent metal cation.

It belongs to the RNase HII family. Mn(2+) is required as a cofactor. It depends on Mg(2+) as a cofactor.

The protein resides in the cytoplasm. It catalyses the reaction Endonucleolytic cleavage to 5'-phosphomonoester.. Endonuclease that specifically degrades the RNA of RNA-DNA hybrids. The polypeptide is Ribonuclease HII (Natranaerobius thermophilus (strain ATCC BAA-1301 / DSM 18059 / JW/NM-WN-LF)).